Consider the following 119-residue polypeptide: Dihydroneopterin aldolase (119 aa).

Substrate is bound by residues E21, Y53, and 72–73 (ID). The Proton donor/acceptor role is filled by K99.

Belongs to the DHNA family.

It carries out the reaction 7,8-dihydroneopterin = 6-hydroxymethyl-7,8-dihydropterin + glycolaldehyde. It participates in cofactor biosynthesis; tetrahydrofolate biosynthesis; 2-amino-4-hydroxy-6-hydroxymethyl-7,8-dihydropteridine diphosphate from 7,8-dihydroneopterin triphosphate: step 3/4. Its function is as follows. Catalyzes the conversion of 7,8-dihydroneopterin to 6-hydroxymethyl-7,8-dihydropterin. The chain is Dihydroneopterin aldolase (folB) from Streptococcus pyogenes.